The primary structure comprises 419 residues: 3-isopropylmalate dehydratase large subunit (419 aa).

Cysteine 300, cysteine 360, and cysteine 363 together coordinate [4Fe-4S] cluster.

This sequence belongs to the aconitase/IPM isomerase family. LeuC type 2 subfamily. In terms of assembly, heterodimer of LeuC and LeuD. [4Fe-4S] cluster is required as a cofactor.

It catalyses the reaction (2R,3S)-3-isopropylmalate = (2S)-2-isopropylmalate. It participates in amino-acid biosynthesis; L-leucine biosynthesis; L-leucine from 3-methyl-2-oxobutanoate: step 2/4. In terms of biological role, catalyzes the isomerization between 2-isopropylmalate and 3-isopropylmalate, via the formation of 2-isopropylmaleate. This chain is 3-isopropylmalate dehydratase large subunit, found in Clostridium botulinum (strain Alaska E43 / Type E3).